Here is a 530-residue protein sequence, read N- to C-terminus: Vesicular acetylcholine transporter (530 aa).

Residues 1–33 are Cytoplasmic-facing; the sequence is MEPTAPTGQARAAATKLSEAVGAALQEPQRQRR. Residues 34 to 54 form a helical membrane-spanning segment; that stretch reads LVLVIVCVALLLDNMLYMVIV. The Lumenal, vesicle portion of the chain corresponds to 55 to 125; that stretch reads PIVPDYIAHM…PTESEDVKIG (71 aa). N89 and N96 each carry an N-linked (GlcNAc...) asparagine glycan. A helical transmembrane segment spans residues 126 to 146; sequence VLFASKAILQLLVNPLSGPFI. Over 147 to 152 the chain is Cytoplasmic; the sequence is DRMSYD. A helical membrane pass occupies residues 153 to 173; the sequence is VPLLIGLGVMFASTVMFAFAE. At 174–182 the chain is on the lumenal, vesicle side; the sequence is DYATLFAAR. The helical transmembrane segment at 183–203 threads the bilayer; the sequence is SLQGLGSAFADTSGIAMIADK. Residues 204–213 lie on the Cytoplasmic side of the membrane; that stretch reads YPEEPERSRA. Residues 214–234 traverse the membrane as a helical segment; sequence LGVALAFISFGSLVAPPFGGI. Residues 235–242 are Lumenal, vesicle-facing; sequence LYEFAGKR. A helical transmembrane segment spans residues 243–263; the sequence is VPFLVLAAVSLFDALLLLAVA. At 264 to 289 the chain is on the cytoplasmic side; the sequence is KPFSAAARARANLPVGTPIHRLMLDP. A helical membrane pass occupies residues 290–310; the sequence is YIAVVAGALTTCNIPLAFLEP. Residues 311-325 lie on the Lumenal, vesicle side of the membrane; it reads TIATWMKHTMAASEW. Residues 326–346 form a helical membrane-spanning segment; the sequence is EMGMVWLPAFVPHVLGVYLTV. Over 347–356 the chain is Cytoplasmic; sequence RLAARYPHLQ. A helical membrane pass occupies residues 357 to 377; the sequence is WLYGALGLAVIGVSSCVVPAC. Residues 378–388 are Lumenal, vesicle-facing; the sequence is RSFAPLVVSLC. A helical transmembrane segment spans residues 389-409; the sequence is GLCFGIALVDTALLPTLAFLV. At 410-422 the chain is on the cytoplasmic side; the sequence is DVRHVSVYGSVYA. A helical transmembrane segment spans residues 423–443; that stretch reads IADISYSVAYALGPIVAGHIV. Residues 444-447 lie on the Lumenal, vesicle side of the membrane; the sequence is HSLG. Residues 448-468 form a helical membrane-spanning segment; the sequence is FEQLSLGMGLANLLYAPVLLL. The Cytoplasmic portion of the chain corresponds to 469 to 530; it reads LRNVGLLTRS…EDDYNYYSRS (62 aa). Residues 471 to 530 are mediates interaction with SEC14L1; sequence NVGLLTRSRSERDVLLDEPPQGLYDAVRLREVQGKDGGEPCSPPGPFDGCEDDYNYYSRS. The segment at 504 to 530 is disordered; it reads GKDGGEPCSPPGPFDGCEDDYNYYSRS.

The protein belongs to the major facilitator superfamily. Vesicular transporter family. Interacts with SEC14L1. In terms of tissue distribution, high expression in all major cholinergic cell groups, including peripheral postganglionic parasympathetic cells, preganglionic sympathetic and parasympathetic cells, ventral spinal cord and brainstem motoneurons, cell groups in the basal forebrain, the habenula and the corpus striatum. Weakly expressed in the cortex and hippocampus.

Its subcellular location is the cytoplasmic vesicle. The protein localises to the secretory vesicle. The protein resides in the synaptic vesicle membrane. The catalysed reaction is acetylcholine(out) + 2 H(+)(in) = acetylcholine(in) + 2 H(+)(out). It catalyses the reaction choline(in) + 2 H(+)(out) = choline(out) + 2 H(+)(in). It carries out the reaction serotonin(in) + 2 H(+)(out) = serotonin(out) + 2 H(+)(in). Its activity is regulated as follows. Potently inhibited by L-vesamicol. In terms of biological role, electrogenic antiporter that exchanges one cholinergic neurotransmitter, acetylcholine or choline, with two intravesicular protons across the membrane of synaptic vesicles. Uses the electrochemical proton gradient established by the V-type proton-pump ATPase to store neurotransmitters inside the vesicles prior to their release via exocytosis. Determines cholinergic vesicular quantal size at presynaptic nerve terminals in developing neuro-muscular junctions with an impact on motor neuron differentiation and innervation pattern. Part of forebrain cholinergic system, regulates hippocampal synapse transmissions that underlie spatial memory formation. Can transport serotonin. This chain is Vesicular acetylcholine transporter (Slc18a3), found in Rattus norvegicus (Rat).